Consider the following 153-residue polypeptide: Large ribosomal subunit protein uL15 (153 aa).

The segment at 1 to 49 (MQLHNLYPFPEERKTRRRVGRGSGSGLGCTAGKGHKGQNARAGGGVAPG) is disordered. The segment covering 21–31 (RGSGSGLGCTA) has biased composition (gly residues).

This sequence belongs to the universal ribosomal protein uL15 family. In terms of assembly, part of the 50S ribosomal subunit.

In terms of biological role, binds to the 23S rRNA. The sequence is that of Large ribosomal subunit protein uL15 from Desulfovibrio desulfuricans (strain ATCC 27774 / DSM 6949 / MB).